Reading from the N-terminus, the 144-residue chain is C-C motif chemokine 25 (144 aa).

An N-terminal signal peptide occupies residues 1–23 (MKLWLFACLVACFVGAWMPVVHA). 2 disulfide bridges follow: cysteine 30-cysteine 58 and cysteine 31-cysteine 73. The segment at 98–144 (KSASDSQTERKKSNHMKSKVENPNSTSVRSATLGHPRMVMMPRKTNN) is disordered. Positions 118–127 (ENPNSTSVRS) are enriched in polar residues.

The protein belongs to the intercrine beta (chemokine CC) family. Specifically expressed by thymic dendritic cells. High levels in thymus and small intestine.

It localises to the secreted. In terms of biological role, potentially involved in T-cell development. Recombinant protein shows chemotactic activity on thymocytes, macrophages, THP-1 cells, and dendritics cells but is inactive on peripheral blood lymphocytes and neutrophils. Binds to CCR9. Binds to atypical chemokine receptor ACKR4 and mediates the recruitment of beta-arrestin (ARRB1/2) to ACKR4. This Mus musculus (Mouse) protein is C-C motif chemokine 25 (Ccl25).